The primary structure comprises 133 residues: Ribonuclease P protein component (133 aa).

The protein belongs to the RnpA family. Consists of a catalytic RNA component (M1 or rnpB) and a protein subunit.

It carries out the reaction Endonucleolytic cleavage of RNA, removing 5'-extranucleotides from tRNA precursor.. Functionally, RNaseP catalyzes the removal of the 5'-leader sequence from pre-tRNA to produce the mature 5'-terminus. It can also cleave other RNA substrates such as 4.5S RNA. The protein component plays an auxiliary but essential role in vivo by binding to the 5'-leader sequence and broadening the substrate specificity of the ribozyme. This is Ribonuclease P protein component from Bartonella quintana (strain Toulouse) (Rochalimaea quintana).